The following is a 452-amino-acid chain: Caspase-2 (452 aa).

At A2 the chain carries N-acetylalanine. The propeptide occupies 2–169 (AAPSAGSWST…TVEHSLDNKD (168 aa)). The CARD domain occupies 32 to 121 (MHPHHQETLK…GHLEDMLLTT (90 aa)). S157 carries the post-translational modification Phosphoserine. Residues H277 and C320 contribute to the active site. Residues 326–333 (DRGVDQQD) constitute a propeptide that is removed on maturation. A compositionally biased stretch (basic and acidic residues) spans 327 to 336 (RGVDQQDGKN). The disordered stretch occupies residues 327-354 (RGVDQQDGKNHAGSPGCEESDAGKEKLP). Phosphoserine is present on S340.

Belongs to the peptidase C14A family. As to quaternary structure, heterotetramer that consists of two anti-parallel arranged heterodimers, each one formed by a p18 subunit and a p12 subunit. Forms a complex named the PIDDosome with PIDD1 and CRADD. Interacts with NOL3 (via CARD domain); inhibits CASP2 activity in a phosphorylation-dependent manner. Post-translationally, the mature protease can process its own propeptide, but not that of other caspases. Expressed at higher levels in the embryonic lung, liver and kidney than in the heart and brain. In adults, higher level expression is seen in the placenta, lung, kidney, and pancreas than in the heart, brain, liver and skeletal muscle.

The enzyme catalyses Strict requirement for an Asp residue at P1, with 316-Asp being essential for proteolytic activity and has a preferred cleavage sequence of Val-Asp-Val-Ala-Asp-|-.. In terms of biological role, is a regulator of the cascade of caspases responsible for apoptosis execution. Might function by either activating some proteins required for cell death or inactivating proteins necessary for cell survival. Associates with PIDD1 and CRADD to form the PIDDosome, a complex that activates CASP2 and triggers apoptosis in response to genotoxic stress. Functionally, acts as a positive regulator of apoptosis. Acts as a negative regulator of apoptosis. Its function is as follows. May function as an endogenous apoptosis inhibitor that antagonizes caspase activation and cell death. In Homo sapiens (Human), this protein is Caspase-2 (CASP2).